A 219-amino-acid chain; its full sequence is MLNVFRIAGDFSHLASIIILIQSITTSNSVDGISLKTQLLYTLVFITRYLNLFTKWTSLYNFLMKIVFISSSVYVIVLMRQQKFKNPVAYQDMITRDQFKIKFLIVPCILLGLIFNYRFSFIQICWSFSLWLESVAILPQLFMLTKTGKAKQLTSHYIFALGLYRALYIPNWIWRYYTEERFDKLSVFTGVIQTLVYSDFFYIYYQKVIKLGGDLELPQ.

Residues 1–3 (MLN) lie on the Lumenal side of the membrane. The chain crosses the membrane as a helical span at residues 4–22 (VFRIAGDFSHLASIIILIQ). The Cytoplasmic portion of the chain corresponds to 23–36 (SITTSNSVDGISLK). The helical transmembrane segment at 37-54 (TQLLYTLVFITRYLNLFT) threads the bilayer. Topologically, residues 55-62 (KWTSLYNF) are lumenal. A helical membrane pass occupies residues 63–82 (LMKIVFISSSVYVIVLMRQQ). Residues 83 to 102 (KFKNPVAYQDMITRDQFKIK) lie on the Cytoplasmic side of the membrane. A helical membrane pass occupies residues 103-116 (FLIVPCILLGLIFN). At 117 to 123 (YRFSFIQ) the chain is on the lumenal side. A helical transmembrane segment spans residues 124–143 (ICWSFSLWLESVAILPQLFM). Residues 144 to 155 (LTKTGKAKQLTS) are Cytoplasmic-facing. Residues 156 to 174 (HYIFALGLYRALYIPNWIW) traverse the membrane as a helical segment. Topologically, residues 175 to 184 (RYYTEERFDK) are lumenal. A helical transmembrane segment spans residues 185 to 205 (LSVFTGVIQTLVYSDFFYIYY). The Cytoplasmic portion of the chain corresponds to 206-219 (QKVIKLGGDLELPQ).

The protein belongs to the ERD2 family.

Its subcellular location is the endoplasmic reticulum membrane. Required for the retention of luminal endoplasmic reticulum proteins. Determines the specificity of the luminal ER protein retention system. Also required for normal vesicular traffic through the Golgi. This receptor recognizes H-D-E-L and D-D-E-L, but not K-D-E-L. In Kluyveromyces lactis (strain ATCC 8585 / CBS 2359 / DSM 70799 / NBRC 1267 / NRRL Y-1140 / WM37) (Yeast), this protein is ER lumen protein-retaining receptor (ERD2).